Consider the following 310-residue polypeptide: MIIVTGGAGFIGSNIVKALNDKGITDILVVDNLKDGTKFVNLVDLNIADYMDKEDFLIQIMSGEELGDIEAIFHEGACSSTTEWDGKYMMDNNYQYSKELLHYCLERGIPFLYASSAATYGGRTSDFIESREYEKPLNVYGYSKFLFDEYVRQILPEANSQIVGFRYFNVYGPREGHKGSMASVAFHLNTQLNNGESPKLFEGSENFKRDFVYVGDVAAVNLWFLESGKSGIFNLGTGRAESFQAVADATLAYHKKGSIEYIPFPDKLKGRYQAFTQADLTNLRNAGYDKPFKTVAEGVTEYMAWLNRDA.

NADP(+)-binding positions include Phe-10–Ile-11, Asp-31–Asn-32, Lys-38, Lys-53, Glu-75–Ser-79, and Asn-92. Residue Tyr-140 is the Proton acceptor of the active site. Lys-144 is a binding site for NADP(+). Asn-169 is a binding site for substrate. Positions 170 and 178 each coordinate NADP(+). Catalysis depends on Lys-178, which acts as the Proton acceptor. Substrate is bound by residues Ser-180, His-187, Phe-201 to Ser-204, Arg-209, and Tyr-272.

This sequence belongs to the NAD(P)-dependent epimerase/dehydratase family. HldD subfamily. In terms of assembly, homopentamer. The cofactor is NADP(+).

It catalyses the reaction ADP-D-glycero-beta-D-manno-heptose = ADP-L-glycero-beta-D-manno-heptose. Its pathway is nucleotide-sugar biosynthesis; ADP-L-glycero-beta-D-manno-heptose biosynthesis; ADP-L-glycero-beta-D-manno-heptose from D-glycero-beta-D-manno-heptose 7-phosphate: step 4/4. Functionally, catalyzes the interconversion between ADP-D-glycero-beta-D-manno-heptose and ADP-L-glycero-beta-D-manno-heptose via an epimerization at carbon 6 of the heptose. The sequence is that of ADP-L-glycero-D-manno-heptose-6-epimerase from Salmonella paratyphi C (strain RKS4594).